The following is a 137-amino-acid chain: Mandibular organ-inhibiting hormone (137 aa).

The signal sequence occupies residues 1–26 (MTTKCTVMAVVLAACICLQVLPQAYG). A Pyrrolidone carboxylic acid modification is found at glutamine 63. Intrachain disulfides connect cysteine 69/cysteine 105, cysteine 85/cysteine 101, and cysteine 88/cysteine 114. Valine amide is present on valine 134.

This sequence belongs to the arthropod CHH/MIH/GIH/VIH hormone family. As to expression, produced by the medulla terminalis X-organ in the eyestalks and transported to the sinus gland where it is stored and released.

The protein localises to the secreted. Represses the synthesis of methyl farnesoate, the precursor of insect juvenile hormone III in the mandibular organ. Also has hyperglycemic activity. In Libinia emarginata (Portly spider crab), this protein is Mandibular organ-inhibiting hormone.